A 207-amino-acid polypeptide reads, in one-letter code: MSYSDKRDQYAPHMALVPMVVEQTTRGERSYDIYSRLLKERIIFLTGQVEDHMANLVAAQMLFLEAENPEKDIFLYINSPGGVITAGMSIYDTMQFIKPDVSTICMGQACSMGAFLLTAGAKGKRICLPNSRVMIHQPLGGFQGQATDIEIHAQEILKVKSRMNELMAKHTGRPIEEIAKDTERDRFLSADEAVEYGLVDKIFTHRD.

Serine 111 functions as the Nucleophile in the catalytic mechanism. Histidine 136 is an active-site residue.

Belongs to the peptidase S14 family. As to quaternary structure, fourteen ClpP subunits assemble into 2 heptameric rings which stack back to back to give a disk-like structure with a central cavity, resembling the structure of eukaryotic proteasomes.

The protein localises to the cytoplasm. It catalyses the reaction Hydrolysis of proteins to small peptides in the presence of ATP and magnesium. alpha-casein is the usual test substrate. In the absence of ATP, only oligopeptides shorter than five residues are hydrolyzed (such as succinyl-Leu-Tyr-|-NHMec, and Leu-Tyr-Leu-|-Tyr-Trp, in which cleavage of the -Tyr-|-Leu- and -Tyr-|-Trp bonds also occurs).. Cleaves peptides in various proteins in a process that requires ATP hydrolysis. Has a chymotrypsin-like activity. Plays a major role in the degradation of misfolded proteins. This chain is ATP-dependent Clp protease proteolytic subunit, found in Photorhabdus laumondii subsp. laumondii (strain DSM 15139 / CIP 105565 / TT01) (Photorhabdus luminescens subsp. laumondii).